A 213-amino-acid chain; its full sequence is Mediator of RNA polymerase II transcription subunit 7 (213 aa).

The disordered stretch occupies residues threonine 96–glutamate 120. Over residues glutamate 97–glutamate 120 the composition is skewed to polar residues.

Belongs to the Mediator complex subunit 7 family. In terms of assembly, component of the Mediator complex.

It is found in the nucleus. Functionally, component of the Mediator complex, a coactivator involved in the regulated transcription of nearly all RNA polymerase II-dependent genes. Mediator functions as a bridge to convey information from gene-specific regulatory proteins to the basal RNA polymerase II transcription machinery. Mediator is recruited to promoters by direct interactions with regulatory proteins and serves as a scaffold for the assembly of a functional preinitiation complex with RNA polymerase II and the general transcription factors. This Kluyveromyces lactis (strain ATCC 8585 / CBS 2359 / DSM 70799 / NBRC 1267 / NRRL Y-1140 / WM37) (Yeast) protein is Mediator of RNA polymerase II transcription subunit 7 (MED7).